The primary structure comprises 37 residues: Kappa-actitoxin-Bcs3b (37 aa).

One can recognise a ShKT domain in the interval 2–37; that stretch reads CKDGFPTATCQHAKLVGNCKNSQKYRANCAKTCGPC. 3 cysteine pairs are disulfide-bonded: cysteine 2-cysteine 37, cysteine 11-cysteine 30, and cysteine 20-cysteine 34. Residues 25-26 are crucial for binding to potassium channels; it reads KY.

It belongs to the sea anemone type 1 potassium channel toxin family. Type 1b subfamily.

It is found in the secreted. It localises to the nematocyst. Functionally, inhibits voltage-gated potassium channels (IC(50)=14.42 nM for rKCNA1/Kv1.1, IC(50)=80.4 nM for rKCNA2/Kv1.2, IC(50)=7.76 nM for rKCNA6/Kv1.6, IC(50)=13.12 nM for hKCNA3/Kv1.3, and IC(50)=49.14 nM for insect Shaker IR). Binds the Shaker IR channels in a voltage-independent manner. This chain is Kappa-actitoxin-Bcs3b, found in Bunodosoma caissarum (Sea anemone).